The following is a 157-amino-acid chain: Small ribosomal subunit protein uS7 (157 aa).

This sequence belongs to the universal ribosomal protein uS7 family. In terms of assembly, part of the 30S ribosomal subunit. Contacts proteins S9 and S11.

Functionally, one of the primary rRNA binding proteins, it binds directly to 16S rRNA where it nucleates assembly of the head domain of the 30S subunit. Is located at the subunit interface close to the decoding center, probably blocks exit of the E-site tRNA. The protein is Small ribosomal subunit protein uS7 of Roseiflexus sp. (strain RS-1).